We begin with the raw amino-acid sequence, 311 residues long: tRNA-cytidine(32) 2-sulfurtransferase (311 aa).

A PP-loop motif motif is present at residues 47–52 (SGGKDS). [4Fe-4S] cluster contacts are provided by cysteine 122, cysteine 125, and cysteine 213.

Belongs to the TtcA family. In terms of assembly, homodimer. Requires Mg(2+) as cofactor. [4Fe-4S] cluster is required as a cofactor.

It localises to the cytoplasm. It catalyses the reaction cytidine(32) in tRNA + S-sulfanyl-L-cysteinyl-[cysteine desulfurase] + AH2 + ATP = 2-thiocytidine(32) in tRNA + L-cysteinyl-[cysteine desulfurase] + A + AMP + diphosphate + H(+). It participates in tRNA modification. Functionally, catalyzes the ATP-dependent 2-thiolation of cytidine in position 32 of tRNA, to form 2-thiocytidine (s(2)C32). The sulfur atoms are provided by the cysteine/cysteine desulfurase (IscS) system. The polypeptide is tRNA-cytidine(32) 2-sulfurtransferase (Escherichia coli O157:H7).